The sequence spans 398 residues: LIM domain-binding protein 2 (398 aa).

Disordered regions lie at residues 245 to 280 (PPAE…TSAY) and 354 to 398 (DAAN…QASQ). Residues 263–279 (STNNASNSNAGNNATSA) are compositionally biased toward low complexity. The 40-residue stretch at 323–362 (DVMVVGEPTLMGGEFGDEDERLITRLENTQYDAANGMDDE) folds into the LIM interaction domain (LID) domain.

The protein belongs to the LDB family. Expressed in adult brain, lung, spleen and kidney. Isoform b is generally expressed at a higher level than isoform a.

It localises to the nucleus. Binds to the LIM domain of a wide variety of LIM domain-containing transcription factors. This chain is LIM domain-binding protein 2, found in Xenopus laevis (African clawed frog).